Reading from the N-terminus, the 255-residue chain is Hydroxyacylglutathione hydrolase (255 aa).

Zn(2+)-binding residues include His-53, His-55, Asp-57, His-58, His-110, Asp-127, and His-165.

It belongs to the metallo-beta-lactamase superfamily. Glyoxalase II family. As to quaternary structure, monomer. Requires Zn(2+) as cofactor.

It carries out the reaction an S-(2-hydroxyacyl)glutathione + H2O = a 2-hydroxy carboxylate + glutathione + H(+). It functions in the pathway secondary metabolite metabolism; methylglyoxal degradation; (R)-lactate from methylglyoxal: step 2/2. Thiolesterase that catalyzes the hydrolysis of S-D-lactoyl-glutathione to form glutathione and D-lactic acid. The polypeptide is Hydroxyacylglutathione hydrolase (Xanthomonas axonopodis pv. citri (strain 306)).